The following is a 275-amino-acid chain: Putative hydro-lyase SPO1111 (275 aa).

It belongs to the D-glutamate cyclase family.

The sequence is that of Putative hydro-lyase SPO1111 from Ruegeria pomeroyi (strain ATCC 700808 / DSM 15171 / DSS-3) (Silicibacter pomeroyi).